A 101-amino-acid polypeptide reads, in one-letter code: Chaperone modulatory protein CbpM (101 aa).

It belongs to the CbpM family.

Functionally, interacts with CbpA and inhibits both the DnaJ-like co-chaperone activity and the DNA binding activity of CbpA. Together with CbpA, modulates the activity of the DnaK chaperone system. Does not inhibit the co-chaperone activity of DnaJ. The chain is Chaperone modulatory protein CbpM from Salmonella agona (strain SL483).